Here is a 173-residue protein sequence, read N- to C-terminus: 5-hydroxymethyl-dUMP N-hydrolase (173 aa).

An N-acetylalanine modification is found at Ala-2. Gly-16 contributes to the 5-hydroxymethyl-dUMP binding site. Ser-17 is modified (phosphoserine). Residues Ile-18, Arg-19, Gly-20, Ser-87, Gly-89, and Glu-93 each coordinate 5-hydroxymethyl-dUMP. A Phosphoserine modification is found at Ser-87. Residues Ser-112, Ser-117, Ser-127, and Ser-158 each carry the phosphoserine modification. Ser-117 contributes to the 5-hydroxymethyl-dUMP binding site.

This sequence belongs to the 2'-deoxynucleoside 5'-phosphate N-hydrolase 1 family. As to quaternary structure, monomer and homodimer.

It localises to the cytoplasm. Its subcellular location is the nucleus. The catalysed reaction is 5-hydroxymethyl-dUMP + H2O = 5-hydroxymethyluracil + 2-deoxy-D-ribose 5-phosphate. Its function is as follows. Part of a nucleotide salvage pathway that eliminates epigenetically modified 5-hydroxymethyl-dCMP (hmdCMP) in a two-step process entailing deamination to cytotoxic 5-hydroxymethyl-dUMP (hmdUMP), followed by its hydrolysis into 5-hydroxymethyluracil (hmU) and 2-deoxy-D-ribose 5-phosphate (deoxyribosephosphate). Catalyzes the second step in that pathway, the hydrolysis of the N-glycosidic bond in hmdUMP, degrading this cytotoxic nucleotide to avoid its genomic integration. This is 5-hydroxymethyl-dUMP N-hydrolase from Mus musculus (Mouse).